The primary structure comprises 415 residues: Putative ankyrin repeat protein FPV034 (415 aa).

ANK repeat units follow at residues 12–41 (ICIK…NINT), 43–72 (KHFN…NINI), 76–105 (VGYT…IINK), 107–135 (DYRL…NINV), 139–168 (KGYT…DISI), 170–200 (NKYS…DVNI), 203–232 (HVKA…DVNI), 237–266 (GGRT…NVDS), 270–299 (VGNT…DINV), and 303–332 (FGET…SLKV).

The protein is Putative ankyrin repeat protein FPV034 (ANK2) of Fowlpox virus (strain NVSL) (FPV).